The sequence spans 289 residues: GTPase Era (289 aa).

The 166-residue stretch at 2-167 folds into the Era-type G domain; that stretch reads KSGFVSLIGR…LREIAKLLPE (166 aa). Residues 10-17 form a G1 region; it reads GRTNAGKS. 10-17 lines the GTP pocket; that stretch reads GRTNAGKS. The tract at residues 36 to 40 is G2; it reads NATRR. Residues 57-60 are G3; that stretch reads DTPG. Residues 57 to 61 and 116 to 119 contribute to the GTP site; these read DTPGL and TKTD. The G4 stretch occupies residues 116 to 119; sequence TKTD. A G5 region spans residues 146 to 148; the sequence is VNI. Residues 186 to 274 form the KH type-2 domain; sequence YRDFILESVY…HLNLQIFVKK (89 aa).

Belongs to the TRAFAC class TrmE-Era-EngA-EngB-Septin-like GTPase superfamily. Era GTPase family. Monomer.

It is found in the cytoplasm. It localises to the cell inner membrane. Its function is as follows. An essential GTPase that binds both GDP and GTP, with rapid nucleotide exchange. Plays a role in 16S rRNA processing and 30S ribosomal subunit biogenesis and possibly also in cell cycle regulation and energy metabolism. The sequence is that of GTPase Era from Campylobacter hominis (strain ATCC BAA-381 / DSM 21671 / CCUG 45161 / LMG 19568 / NCTC 13146 / CH001A).